The following is a 333-amino-acid chain: Ornithine carbamoyltransferase (333 aa).

Carbamoyl phosphate is bound by residues 56-59 (STRT), Q83, R107, and 134-137 (HPTQ). L-ornithine-binding positions include N167, D231, and 235–236 (SM). Residues 273 to 274 (CL) and R318 each bind carbamoyl phosphate.

This sequence belongs to the aspartate/ornithine carbamoyltransferase superfamily. OTCase family.

The protein localises to the cytoplasm. It carries out the reaction carbamoyl phosphate + L-ornithine = L-citrulline + phosphate + H(+). Its pathway is amino-acid biosynthesis; L-arginine biosynthesis; L-arginine from L-ornithine and carbamoyl phosphate: step 1/3. Functionally, has vitronectin and fibronectin-binding activity. Its function is as follows. Reversibly catalyzes the transfer of the carbamoyl group from carbamoyl phosphate (CP) to the N(epsilon) atom of ornithine (ORN) to produce L-citrulline. This chain is Ornithine carbamoyltransferase (argF), found in Staphylococcus epidermidis (strain ATCC 12228 / FDA PCI 1200).